Here is a 98-residue protein sequence, read N- to C-terminus: Putative transcriptional regulator YdaS (98 aa).

Functionally, when overexpressed, it induces Rac prophage excision, possibly to counteract the lethal toxicity of YdaT. Overexpression of ydaS or ydaST reduces growth and leads to loss of cell viability. May contribute to toxicity and morphological defects. The sequence is that of Putative transcriptional regulator YdaS (ydaS) from Escherichia coli (strain K12).